The primary structure comprises 214 residues: MSLSTFSGGSTTACAACKHQRKKCKKNCILARYFPQDGTNKFLNAHKLFGVSNITKMLKRIEESQRDIAMENLIYHANARALDPVGGVYRTICDLKCKIEFVQTELNLTRQQIDMCRSLAQEQHRQRQNLPYRCNSFESLLQQDGDEYVNVDGLDHQNMQQQQEMQQQQQNPSNYDMFLEMPEQTSKVKLEEEKISDQRKNNLMRQILMSSAII.

An LOB domain is found at 12 to 113; sequence TACAACKHQR…TELNLTRQQI (102 aa).

It belongs to the LOB domain-containing protein family.

The polypeptide is LOB domain-containing protein 7 (LBD7) (Arabidopsis thaliana (Mouse-ear cress)).